We begin with the raw amino-acid sequence, 1109 residues long: Protein argonaute 3 (1109 aa).

The segment covering 1 to 13 has biased composition (basic and acidic residues); sequence MAGRGGRDPRRGY. Disordered regions lie at residues 1 to 83 and 125 to 220; these read MAGR…GLVR and DHRD…PLSK. Gly residues-rich tracts occupy residues 14–30, 37–54, and 62–83; these read DGGY…GGTN, RGGG…GGRG, and DVLG…GLVR. A compositionally biased stretch (basic and acidic residues) spans 125 to 134; sequence DHRDQHDHQS. The span at 135–161 shows a compositional bias: basic residues; it reads QRHHHRHHHHQRQRHHHHHQRQQRRGS. The PAZ domain occupies 411–521; sequence SVLDLVKTMK…VPIEFCNIPE (111 aa). A compositionally biased stretch (basic and acidic residues) spans 527-545; sequence VARLDDKKSDNKGEQEKPS. The tract at residues 527-548 is disordered; the sequence is VARLDDKKSDNKGEQEKPSTKT. The region spanning 720 to 1023 is the Piwi domain; it reads LLFCPMLNRC…AAYRGRLYYE (304 aa).

It belongs to the argonaute family. Ago subfamily.

In terms of biological role, probably involved in the RNA silencing pathway. May bind to short RNAs such as microRNAs (miRNAs) or short interfering RNAs (siRNAs), and represses the translation of mRNAs which are complementary to them. The polypeptide is Protein argonaute 3 (AGO3) (Oryza sativa subsp. japonica (Rice)).